Reading from the N-terminus, the 253-residue chain is Probable transcriptional regulatory protein Tpet_0454 (253 aa).

It belongs to the TACO1 family.

The protein localises to the cytoplasm. This Thermotoga petrophila (strain ATCC BAA-488 / DSM 13995 / JCM 10881 / RKU-1) protein is Probable transcriptional regulatory protein Tpet_0454.